The chain runs to 297 residues: Protein PecM (297 aa).

The next 10 membrane-spanning stretches (helical) occupy residues 6–26 (FAFY…QFLP), 38–58 (ALPA…GWLW), 60–80 (LFVL…FAAY), 86–106 (VVAL…FLLL), 116–136 (VAAV…KAPL), 138–158 (PAGL…LVLT), 167–187 (MTML…ILPV), 203–223 (LAGY…MWFS), 231–251 (VIMS…GFLF), and 261–281 (LVGV…SLFS). 2 EamA domains span residues 12–130 (CVWG…LLIS) and 149–276 (MSMA…IVQD).

It belongs to the EamA transporter family.

It is found in the cell membrane. Its function is as follows. Involved in pectinase, cellulase, and blue pigment regulation. This chain is Protein PecM (pecM), found in Dickeya dadantii (strain 3937) (Erwinia chrysanthemi (strain 3937)).